We begin with the raw amino-acid sequence, 476 residues long: Adenosylhomocysteinase (476 aa).

Thr67, Asp142, and Glu202 together coordinate substrate. An NAD(+)-binding site is contributed by 203–205; the sequence is TTT. The substrate site is built by Lys232 and Asp236. NAD(+) is bound by residues Asn237, 266 to 271, Glu289, Asn324, 345 to 347, and Asn390; these read GYGDVG and IGH.

Belongs to the adenosylhomocysteinase family. NAD(+) is required as a cofactor.

Its subcellular location is the cytoplasm. The enzyme catalyses S-adenosyl-L-homocysteine + H2O = L-homocysteine + adenosine. It participates in amino-acid biosynthesis; L-homocysteine biosynthesis; L-homocysteine from S-adenosyl-L-homocysteine: step 1/1. Its function is as follows. May play a key role in the regulation of the intracellular concentration of adenosylhomocysteine. The polypeptide is Adenosylhomocysteinase (Synechococcus sp. (strain CC9311)).